The sequence spans 529 residues: Putative E3 ubiquitin-protein ligase ARI4 (529 aa).

Acidic residues predominate over residues 1–22 (MDDEYMSLEEEEDNCYPSEFDD). The interval 1-23 (MDDEYMSLEEEEDNCYPSEFDDH) is disordered. The tract at residues 115–327 (KTMKCDICME…IAGHSCGRYK (213 aa)) is TRIAD supradomain. Cysteine 119, cysteine 122, cysteine 137, histidine 139, cysteine 142, cysteine 145, cysteine 164, cysteine 169, cysteine 206, cysteine 212, cysteine 230, cysteine 232, cysteine 237, cysteine 240, histidine 245, cysteine 250, cysteine 277, and cysteine 280 together coordinate Zn(2+). The segment at 119–169 (CDICMEEDLSKYAMTRMECGHRFCNDCWKEHFTVRINEGEGKRIRCMAYKC) adopts an RING-type 1 zinc-finger fold. The segment at 186–250 (EKFDRFLIES…LSESHSPCSC (65 aa)) adopts an IBR-type zinc-finger fold. An RING-type 2; atypical zinc finger spans residues 277–305 (CPKCSKPIQKRDGCNHMTCKCGQHFCWLC). The active site involves cysteine 290. Positions 295, 297, 302, 305, 313, and 323 each coordinate Zn(2+).

It belongs to the RBR family. Ariadne subfamily. Zn(2+) is required as a cofactor.

The enzyme catalyses [E2 ubiquitin-conjugating enzyme]-S-ubiquitinyl-L-cysteine + [acceptor protein]-L-lysine = [E2 ubiquitin-conjugating enzyme]-L-cysteine + [acceptor protein]-N(6)-ubiquitinyl-L-lysine.. Its pathway is protein modification; protein ubiquitination. Its function is as follows. Might act as an E3 ubiquitin-protein ligase, or as part of E3 complex, which accepts ubiquitin from specific E2 ubiquitin-conjugating enzymes and then transfers it to substrates. The chain is Putative E3 ubiquitin-protein ligase ARI4 (ARI4) from Arabidopsis thaliana (Mouse-ear cress).